A 245-amino-acid polypeptide reads, in one-letter code: uncharacterized protein (245 aa).

This is an uncharacterized protein from Mycobacterium tuberculosis (strain CDC 1551 / Oshkosh).